We begin with the raw amino-acid sequence, 435 residues long: Methylenetetrahydrofolate--tRNA-(uracil-5-)-methyltransferase TrmFO (435 aa).

An FAD-binding site is contributed by G7–G12.

The protein belongs to the MnmG family. TrmFO subfamily. It depends on FAD as a cofactor.

It is found in the cytoplasm. It catalyses the reaction uridine(54) in tRNA + (6R)-5,10-methylene-5,6,7,8-tetrahydrofolate + NADH + H(+) = 5-methyluridine(54) in tRNA + (6S)-5,6,7,8-tetrahydrofolate + NAD(+). It carries out the reaction uridine(54) in tRNA + (6R)-5,10-methylene-5,6,7,8-tetrahydrofolate + NADPH + H(+) = 5-methyluridine(54) in tRNA + (6S)-5,6,7,8-tetrahydrofolate + NADP(+). In terms of biological role, catalyzes the folate-dependent formation of 5-methyl-uridine at position 54 (M-5-U54) in all tRNAs. This Thermotoga petrophila (strain ATCC BAA-488 / DSM 13995 / JCM 10881 / RKU-1) protein is Methylenetetrahydrofolate--tRNA-(uracil-5-)-methyltransferase TrmFO.